We begin with the raw amino-acid sequence, 547 residues long: Delta-guaiene synthase 2 (547 aa).

Positions 299, 303, and 444 each coordinate Mg(2+). A DDXXD motif motif is present at residues 299 to 303; sequence DDTYD.

This sequence belongs to the terpene synthase family. Requires Mg(2+) as cofactor.

The catalysed reaction is (2E,6E)-farnesyl diphosphate = delta-guaiene + diphosphate. The enzyme catalyses (2E,6E)-farnesyl diphosphate = alpha-guaiene + diphosphate. The protein operates within secondary metabolite biosynthesis; terpenoid biosynthesis. Its function is as follows. Sesquiterpene synthase involved in the biosynthesis of delta-guaiene (53.7%) and alpha-guaiene (44.6%), two structures composed of five- and seven-membered rings. Also produces 1.7% of alpha-humulene. This is Delta-guaiene synthase 2 (C3) from Aquilaria crassna (Eagle wood).